Consider the following 357-residue polypeptide: Sorbitol dehydrogenase 2 (357 aa).

Cysteine 43 lines the Zn(2+) pocket. Residue tyrosine 49 coordinates substrate. Zn(2+)-binding residues include histidine 68 and glutamate 69. Substrate is bound at residue glutamate 154. NAD(+)-binding positions include aspartate 202, lysine 207, 275 to 277, and 299 to 301; these read VGM and CFR. Substrate is bound by residues arginine 301 and tyrosine 302.

The protein belongs to the zinc-containing alcohol dehydrogenase family. In terms of assembly, homotetramer. Zn(2+) is required as a cofactor.

It catalyses the reaction keto-D-fructose + NADH + H(+) = D-sorbitol + NAD(+). The enzyme catalyses xylitol + NAD(+) = D-xylulose + NADH + H(+). Functionally, polyol dehydrogenase that catalyzes the reversible NAD(+)-dependent oxidation of various sugar alcohols. Is active with D-sorbitol (D-glucitol) and xylitol as substrates, leading to the C2-oxidized product D-fructose and D-xylulose, respectively. In Saccharomyces cerevisiae (strain ATCC 204508 / S288c) (Baker's yeast), this protein is Sorbitol dehydrogenase 2 (SOR2).